Consider the following 681-residue polypeptide: CAI-1 autoinducer sensor kinase/phosphatase CqsS (681 aa).

The next 4 membrane-spanning stretches (helical) occupy residues 17–37, 73–93, 112–132, and 148–168; these read LVGWMGFIGFPIYYIVWEFMF, AYYQVVTTLCLPCFFFYMLLM, ILLVHITSVMFVQTFVGIGLA, and MDWTHVPIFLFIYLFGNLFYF. A Histidine kinase domain is found at 187-413; sequence GIAHEMRNPL…QFTMTFPTIG (227 aa). His-190 is modified (phosphohistidine; by autocatalysis). The Response regulatory domain occupies 564 to 681; it reads TIMVVDDNES…RLFDKIANWI (118 aa). Asp-613 is modified (4-aspartylphosphate).

It localises to the cell membrane. It carries out the reaction ATP + protein L-histidine = ADP + protein N-phospho-L-histidine.. Senses the quorum-sensing autoinducer CAI-1 ((S)-3-hydroxytridecan-4-one) which probably functions as an intragenus signal. The sensory signal is then relayed to LuxU and LuxO. This Vibrio campbellii (strain ATCC BAA-1116) protein is CAI-1 autoinducer sensor kinase/phosphatase CqsS (cqsS).